The chain runs to 454 residues: Tumor necrosis factor receptor superfamily member 1A (454 aa).

The first 29 residues, 1-29 (MGLPTVPGLLLSLVLLALLMGIHPSGVTG), serve as a signal peptide directing secretion. Over 30–212 (LVPSLGDREK…VTNPQDSGTA (183 aa)) the chain is Extracellular. 4 TNFR-Cys repeats span residues 43 to 82 (LCPQ…TVCR), 83 to 125 (ECEK…DTVC), 126 to 166 (GCKE…NTVC), and 167 to 196 (NCHA…KLCL). 12 disulfides stabilise this stretch: Cys44–Cys58, Cys59–Cys72, Cys62–Cys81, Cys84–Cys99, Cys102–Cys117, Cys105–Cys125, Cys127–Cys143, Cys146–Cys158, Cys149–Cys166, Cys168–Cys179, Cys182–Cys195, and Cys185–Cys191. Residue Asn54 is glycosylated (N-linked (GlcNAc...) asparagine). Asn151 is a glycosylation site (N-linked (GlcNAc...) asparagine). The N-linked (GlcNAc...) asparagine glycan is linked to Asn202. A helical membrane pass occupies residues 213-235 (VLLPLVILLGLCLLSFIFISLMC). The Cytoplasmic portion of the chain corresponds to 236–454 (RYPRWRPEVY…APSSTTRLPR (219 aa)). An N-SMase activation domain (NSD) region spans residues 339 to 349 (VQKWEDSAHPQ). The Death domain maps to 356-441 (LAILYAVVDG…GCLENILEAL (86 aa)). Arg376 is a glycosylation site ((Microbial infection) N-beta-linked (GlcNAc) arginine).

Binding of TNF to the extracellular domain leads to homotrimerization. The aggregated death domains provide a novel molecular interface that interacts specifically with the death domain of TRADD. Various TRADD-interacting proteins such as TRAFS, RIPK1 and possibly FADD, are recruited to the complex by their association with TRADD. This complex activates at least two distinct signaling cascades, apoptosis and NF-kappa-B signaling. Interacts with BAG4, BABAM2, FEM1B, GRB2, SQSTM1 and TRPC4AP. Interacts with DAB2IP. Interacts directly with NOL3 (via CARD domain); inhibits TNF-signaling pathway. Interacts with SH3RF2, TRADD and RIPK1. SH3RF2 facilitates the recruitment of RIPK1 and TRADD to TNFRSF1A in a TNF-alpha-dependent process. Interacts with PGLYRP1; this interaction is important for cell death induction. Interacts (via death domain) with MADD (via death domain). In terms of processing, (Microbial infection) Glycosylated at Arg-376 by S.typhimurium protein Ssek3: arginine GlcNAcylation prevents homotypic/heterotypic death domain interactions.

Its subcellular location is the cell membrane. It localises to the golgi apparatus membrane. In terms of biological role, receptor for TNFSF2/TNF-alpha and homotrimeric TNFSF1/lymphotoxin-alpha. The adapter molecule FADD recruits caspase-8 to the activated receptor. The resulting death-inducing signaling complex (DISC) performs caspase-8 proteolytic activation which initiates the subsequent cascade of caspases (aspartate-specific cysteine proteases) mediating apoptosis. The protein is Tumor necrosis factor receptor superfamily member 1A (Tnfrsf1a) of Mus musculus (Mouse).